We begin with the raw amino-acid sequence, 294 residues long: 33 kDa chaperonin (294 aa).

Intrachain disulfides connect C238-C240 and C271-C274.

It belongs to the HSP33 family. Post-translationally, under oxidizing conditions two disulfide bonds are formed involving the reactive cysteines. Under reducing conditions zinc is bound to the reactive cysteines and the protein is inactive.

Its subcellular location is the cytoplasm. Its function is as follows. Redox regulated molecular chaperone. Protects both thermally unfolding and oxidatively damaged proteins from irreversible aggregation. Plays an important role in the bacterial defense system toward oxidative stress. The chain is 33 kDa chaperonin from Clostridium tetani (strain Massachusetts / E88).